The sequence spans 337 residues: Holliday junction branch migration complex subunit RuvB (337 aa).

The interval 1–181 is large ATPase domain (RuvB-L); that stretch reads MQRLVEIERF…FGMNFRMQFY (181 aa). Residues L20, R21, G62, K65, T66, T67, 128 to 130, R171, Y181, and R218 each bind ATP; that span reads EDF. Residue T66 participates in Mg(2+) binding. Positions 182–252 are small ATPAse domain (RuvB-S); sequence SPEELSKIIS…RAQYALDELG (71 aa). The interval 255-337 is head domain (RuvB-H); the sequence is SYGFDEMDIK…MPALDDGGLF (83 aa). R309 and R314 together coordinate DNA.

It belongs to the RuvB family. Homohexamer. Forms an RuvA(8)-RuvB(12)-Holliday junction (HJ) complex. HJ DNA is sandwiched between 2 RuvA tetramers; dsDNA enters through RuvA and exits via RuvB. An RuvB hexamer assembles on each DNA strand where it exits the tetramer. Each RuvB hexamer is contacted by two RuvA subunits (via domain III) on 2 adjacent RuvB subunits; this complex drives branch migration. In the full resolvosome a probable DNA-RuvA(4)-RuvB(12)-RuvC(2) complex forms which resolves the HJ.

Its subcellular location is the cytoplasm. The enzyme catalyses ATP + H2O = ADP + phosphate + H(+). The RuvA-RuvB-RuvC complex processes Holliday junction (HJ) DNA during genetic recombination and DNA repair, while the RuvA-RuvB complex plays an important role in the rescue of blocked DNA replication forks via replication fork reversal (RFR). RuvA specifically binds to HJ cruciform DNA, conferring on it an open structure. The RuvB hexamer acts as an ATP-dependent pump, pulling dsDNA into and through the RuvAB complex. RuvB forms 2 homohexamers on either side of HJ DNA bound by 1 or 2 RuvA tetramers; 4 subunits per hexamer contact DNA at a time. Coordinated motions by a converter formed by DNA-disengaged RuvB subunits stimulates ATP hydrolysis and nucleotide exchange. Immobilization of the converter enables RuvB to convert the ATP-contained energy into a lever motion, pulling 2 nucleotides of DNA out of the RuvA tetramer per ATP hydrolyzed, thus driving DNA branch migration. The RuvB motors rotate together with the DNA substrate, which together with the progressing nucleotide cycle form the mechanistic basis for DNA recombination by continuous HJ branch migration. Branch migration allows RuvC to scan DNA until it finds its consensus sequence, where it cleaves and resolves cruciform DNA. The sequence is that of Holliday junction branch migration complex subunit RuvB from Sulfurimonas denitrificans (strain ATCC 33889 / DSM 1251) (Thiomicrospira denitrificans (strain ATCC 33889 / DSM 1251)).